Reading from the N-terminus, the 278-residue chain is HTH-type transcriptional regulator ExsA (278 aa).

Residues 171 to 269 (ERLQLFMEKH…GCTPSRSRQG (99 aa)) form the HTH araC/xylS-type domain. DNA-binding regions (H-T-H motif) lie at residues 188–209 (SDFS…GSVY) and 236–259 (IVDI…RRRF).

As to quaternary structure, homodimer. Interacts with ExsD; this interaction inhibits ExsA activity.

In the absence of inducing signals such as low Ca(2+) or host cell contact, the T3SS/injectisome is expressed at a low basal level and exists in a quiescent state due to ExsA sequestration by ExsD in a 1:1 complex. Upon host cell contact, this interaction is disrupted by the anti-antiactivator protein ExsC leading to ExsA activation. Transcriptional regulator that plays an essential role in the activation the type III secretion system (T3SS) operons. In addition, ExsA directly regulates the transcription of ImpA virulence factor that cooperatively inhibits the functions of host macrophages together with the T3SS. The chain is HTH-type transcriptional regulator ExsA (exsA) from Pseudomonas aeruginosa (strain ATCC 15692 / DSM 22644 / CIP 104116 / JCM 14847 / LMG 12228 / 1C / PRS 101 / PAO1).